A 463-amino-acid polypeptide reads, in one-letter code: Protein DML1 (463 aa).

It belongs to the misato family.

The protein localises to the mitochondrion. Functionally, involved in the partitioning of the mitochondrial organelle and mitochondrial DNA (mtDNA) inheritance. This Debaryomyces hansenii (strain ATCC 36239 / CBS 767 / BCRC 21394 / JCM 1990 / NBRC 0083 / IGC 2968) (Yeast) protein is Protein DML1 (DML1).